A 975-amino-acid chain; its full sequence is Glycine dehydrogenase (decarboxylating) (975 aa).

Lys723 is modified (N6-(pyridoxal phosphate)lysine).

It belongs to the GcvP family. As to quaternary structure, the glycine cleavage system is composed of four proteins: P, T, L and H. Requires pyridoxal 5'-phosphate as cofactor.

It carries out the reaction N(6)-[(R)-lipoyl]-L-lysyl-[glycine-cleavage complex H protein] + glycine + H(+) = N(6)-[(R)-S(8)-aminomethyldihydrolipoyl]-L-lysyl-[glycine-cleavage complex H protein] + CO2. In terms of biological role, the glycine cleavage system catalyzes the degradation of glycine. The P protein binds the alpha-amino group of glycine through its pyridoxal phosphate cofactor; CO(2) is released and the remaining methylamine moiety is then transferred to the lipoamide cofactor of the H protein. The sequence is that of Glycine dehydrogenase (decarboxylating) from Burkholderia ambifaria (strain MC40-6).